The sequence spans 338 residues: Formamidase (338 aa).

The CN hydrolase domain occupies 14-257 (VGIGLVQLQL…NEIITAEVRP (244 aa)). Glu-60 acts as the Proton acceptor in catalysis. The active-site Proton donor is the Lys-129. Cys-162 functions as the Nucleophile in the catalytic mechanism.

The protein belongs to the carbon-nitrogen hydrolase superfamily. Aliphatic amidase family.

The enzyme catalyses formamide + H2O = formate + NH4(+). In terms of biological role, is an aliphatic amidase with a restricted substrate specificity, as it only hydrolyzes formamide. The protein is Formamidase of Allorhizobium ampelinum (strain ATCC BAA-846 / DSM 112012 / S4) (Agrobacterium vitis (strain S4)).